A 938-amino-acid polypeptide reads, in one-letter code: Isoleucine--tRNA ligase (938 aa).

The 'HIGH' region motif lies at 58 to 68 (PYANGNIHMGH). E566 provides a ligand contact to L-isoleucyl-5'-AMP. A 'KMSKS' region motif is present at residues 607-611 (KMSKS). ATP is bound at residue K610. Zn(2+) contacts are provided by C906, C909, C926, and C929.

Belongs to the class-I aminoacyl-tRNA synthetase family. IleS type 1 subfamily. As to quaternary structure, monomer. Zn(2+) is required as a cofactor.

It localises to the cytoplasm. The enzyme catalyses tRNA(Ile) + L-isoleucine + ATP = L-isoleucyl-tRNA(Ile) + AMP + diphosphate. In terms of biological role, catalyzes the attachment of isoleucine to tRNA(Ile). As IleRS can inadvertently accommodate and process structurally similar amino acids such as valine, to avoid such errors it has two additional distinct tRNA(Ile)-dependent editing activities. One activity is designated as 'pretransfer' editing and involves the hydrolysis of activated Val-AMP. The other activity is designated 'posttransfer' editing and involves deacylation of mischarged Val-tRNA(Ile). In Nitratidesulfovibrio vulgaris (strain ATCC 29579 / DSM 644 / CCUG 34227 / NCIMB 8303 / VKM B-1760 / Hildenborough) (Desulfovibrio vulgaris), this protein is Isoleucine--tRNA ligase.